The primary structure comprises 168 residues: RNA pyrophosphohydrolase (168 aa).

A Nudix hydrolase domain is found at 8-159; that stretch reads PYRTCVGVML…KRPVYERVVK (152 aa). The Nudix box motif lies at 47-68; it reads GGVDPGEDTWKAAKRELYEETS.

This sequence belongs to the Nudix hydrolase family. RppH subfamily. A divalent metal cation serves as cofactor.

Its function is as follows. Accelerates the degradation of transcripts by removing pyrophosphate from the 5'-end of triphosphorylated RNA, leading to a more labile monophosphorylated state that can stimulate subsequent ribonuclease cleavage. This is RNA pyrophosphohydrolase from Rhodopseudomonas palustris (strain ATCC BAA-98 / CGA009).